We begin with the raw amino-acid sequence, 126 residues long: Large ribosomal subunit protein bL12 (126 aa).

The protein belongs to the bacterial ribosomal protein bL12 family. As to quaternary structure, homodimer. Part of the ribosomal stalk of the 50S ribosomal subunit. Forms a multimeric L10(L12)X complex, where L10 forms an elongated spine to which 2 to 4 L12 dimers bind in a sequential fashion. Binds GTP-bound translation factors.

Its function is as follows. Forms part of the ribosomal stalk which helps the ribosome interact with GTP-bound translation factors. Is thus essential for accurate translation. This chain is Large ribosomal subunit protein bL12, found in Saccharophagus degradans (strain 2-40 / ATCC 43961 / DSM 17024).